A 492-amino-acid polypeptide reads, in one-letter code: Dipeptide and tripeptide permease A (492 aa).

Topologically, residues 1–20 (MSTANKHPEAASLNAFKQPR) are cytoplasmic. The helical transmembrane segment at 21–43 (SFYLIFSIELWERFGYYGLQGIM) threads the bilayer. Residues 44 to 58 (AVYLVKMLGMSEAQS) are Periplasmic-facing. Residues 59–79 (ITLFASFSALVYGLIAVGGWL) form a helical membrane-spanning segment. Topologically, residues 80-88 (GDKVLGTKR) are cytoplasmic. A helical transmembrane segment spans residues 89 to 109 (VIVLGTLVLALGYALVAWSGH). A topological domain (periplasmic) is located at residue Asp-110. Residues 111 to 131 (IAMIYFGMATIAVGNGLFKAN) traverse the membrane as a helical segment. Topologically, residues 132-152 (PSSLLSTCYEKDDPRLDGAFT) are cytoplasmic. A helical membrane pass occupies residues 153–173 (MYYMAINIGSFFSMLATPWLA). Residues 174 to 178 (AQFGW) lie on the Periplasmic side of the membrane. A helical transmembrane segment spans residues 179–199 (STAFGLSFVGMLITLVNFMFF). The Cytoplasmic segment spans residues 200–217 (RKWVKDHGSKPDFAPLNM). Residues 218-238 (GKLLVTLLGIAVMIAAATWLL) form a helical membrane-spanning segment. At 239 to 245 (HNQDIAR) the chain is on the periplasmic side. Residues 246–266 (MVLGAVAVAIVVIFTKEALTL) traverse the membrane as a helical segment. Over 267 to 273 (KGAARRK) the chain is Cytoplasmic. A helical transmembrane segment spans residues 274-294 (MIVAFLLMLEAIVFFVLYMQM). The Periplasmic segment spans residues 295–319 (PTSLNFFAIRNVEHSLLGIAFQPEQ). A helical transmembrane segment spans residues 320 to 340 (FQALNPFWIMIFSPLLAALYN). Over 341 to 351 (KLGDRMPMPHK) the chain is Cytoplasmic. The helical transmembrane segment at 352-372 (FALGMVLCSAAFLVLPLGASL) threads the bilayer. Residues 373 to 377 (ANKMG) lie on the Periplasmic side of the membrane. Residues 378 to 398 (IVSVGWLVLSYALQSVGELMI) form a helical membrane-spanning segment. Topologically, residues 399–413 (SGLGLAMVAQLVPQR) are cytoplasmic. Residues 414–434 (LMGFIMGSWFLTTAGAAMVAG) traverse the membrane as a helical segment. The Periplasmic portion of the chain corresponds to 435-458 (KVANLMAVPENITNPLLSLHVYGD). Residues 459 to 479 (IFFKIGITTGVIAVLMILAAP) form a helical membrane-spanning segment. Over 480–492 (LLNRMTQDEQPGV) the chain is Cytoplasmic.

Belongs to the major facilitator superfamily. Proton-dependent oligopeptide transporter (POT/PTR) (TC 2.A.17) family. DtpA subfamily.

It localises to the cell inner membrane. Its function is as follows. Proton-dependent permease that transports di- and tripeptides. The sequence is that of Dipeptide and tripeptide permease A from Erwinia pyrifoliae (strain DSM 12163 / CIP 106111 / Ep16/96).